The sequence spans 245 residues: MTSATKTNNSGSISSPIVVALDYANKDAALAFADQVSPQDCRLKVGKEMFTLYGPELIRDLHQRGFDVFLDLKFHDIPNTTARAVAAAAELGVWMVNVHASGGARMMSAAKEALLPYGAQAPLLIAVTVLTSMDGEDLRDIGITISPAEQAERLAKLTWDCGLDGVVCSAHEAVRLKQVCGEDFSLVTPGIRPQGSEAGDQRRIMTPEQAVAAGVDYMVIGRPITQSPDPEKTLREILASLTKVA.

Residues D22, K44, 71–80 (DLKFHDIPNT), T131, R192, Q201, G221, and R222 contribute to the substrate site. The active-site Proton donor is the K73.

The protein belongs to the OMP decarboxylase family. Type 1 subfamily. In terms of assembly, homodimer.

It carries out the reaction orotidine 5'-phosphate + H(+) = UMP + CO2. It participates in pyrimidine metabolism; UMP biosynthesis via de novo pathway; UMP from orotate: step 2/2. Functionally, catalyzes the decarboxylation of orotidine 5'-monophosphate (OMP) to uridine 5'-monophosphate (UMP). In Yersinia pseudotuberculosis serotype O:3 (strain YPIII), this protein is Orotidine 5'-phosphate decarboxylase.